We begin with the raw amino-acid sequence, 920 residues long: Disintegrin and metalloproteinase domain-containing protein 19 (920 aa).

The first 26 residues, 1–26 (MPGRAGVARFCLLALALQLHWPLAAC), serve as a signal peptide directing secretion. The propeptide occupies 27–204 (EPGWTTRGSQ…TKKQPRRMKR (178 aa)). The Extracellular portion of the chain corresponds to 27 to 703 (EPGWTTRGSQ…VDSGPLPPKS (677 aa)). The Cysteine switch signature appears at 131-138 (STCRGIRG). C133 provides a ligand contact to Zn(2+). A glycan (N-linked (GlcNAc...) asparagine) is linked at N145. One can recognise a Peptidase M12B domain in the interval 211–409 (KYVELYLVAD…GGGMCLSNMP (199 aa)). Intrachain disulfides connect C321/C404, C361/C388, and C362/C371. Residue H346 coordinates Zn(2+). E347 is an active-site residue. 2 residues coordinate Zn(2+): H350 and H356. Residues 417 to 503 (GRRCGNGYLE…HCPTNYYQMD (87 aa)) form the Disintegrin domain. N-linked (GlcNAc...) asparagine glycosylation is found at N445 and N448. C475 and C495 are joined by a disulfide. N649 is a glycosylation site (N-linked (GlcNAc...) asparagine). Positions 654–686 (ETEGCGKKCNGHGVCNNNKNCHCFPGWSPPFCN) constitute an EGF-like domain. Intrachain disulfides connect C658–C668, C662–C674, and C676–C685. Residues 704 to 724 (VGPVIAGVFSALFVLAVLVLL) traverse the membrane as a helical segment. Residues 725-920 (CHCYRQSHKL…RVGAIISSKI (196 aa)) are Cytoplasmic-facing. The segment at 755–920 (SQSGGTGHAN…RVGAIISSKI (166 aa)) is disordered. The span at 767-783 (FKLQTPQGKRKVTNTPE) shows a compositional bias: polar residues. Residues 825–834 (ARIERKESAR) show a composition bias toward basic and acidic residues. Residues 835-846 (RPPPSRPMPPAP) carry the SH3-binding motif. Composition is skewed to pro residues over residues 835–846 (RPPPSRPMPPAP) and 888–903 (TSGPQPPRPPAVPVPK).

In terms of assembly, interacts with SH3PXD2A. Requires Zn(2+) as cofactor. In terms of processing, the precursor is cleaved by a furin endopeptidase. As to expression, widely expressed, with the highest expression in bone, heart and lung, followed by brain and spleen and relatively low expression in liver, skeletal muscle, kidney and testis. In bone, primarily expressed in cell of the osteoblast lineage and not detected in mature osteoclasts.

It localises to the membrane. Participates in the proteolytic processing of beta-type neuregulin isoforms which are involved in neurogenesis and synaptogenesis, suggesting a regulatory role in glial cell. Also cleaves alpha-2 macroglobulin. May be involved in osteoblast differentiation and/or osteoblast activity in bone. This is Disintegrin and metalloproteinase domain-containing protein 19 (Adam19) from Mus musculus (Mouse).